The chain runs to 276 residues: Diaminopimelate epimerase (276 aa).

Positions 13, 46, and 66 each coordinate substrate. Cys-75 functions as the Proton donor in the catalytic mechanism. Residues 76 to 77 (GN), Asn-159, Asn-192, and 210 to 211 (ER) each bind substrate. Cys-219 (proton acceptor) is an active-site residue. 220 to 221 (GT) provides a ligand contact to substrate.

This sequence belongs to the diaminopimelate epimerase family. As to quaternary structure, homodimer.

It localises to the cytoplasm. The catalysed reaction is (2S,6S)-2,6-diaminopimelate = meso-2,6-diaminopimelate. The protein operates within amino-acid biosynthesis; L-lysine biosynthesis via DAP pathway; DL-2,6-diaminopimelate from LL-2,6-diaminopimelate: step 1/1. Functionally, catalyzes the stereoinversion of LL-2,6-diaminopimelate (L,L-DAP) to meso-diaminopimelate (meso-DAP), a precursor of L-lysine and an essential component of the bacterial peptidoglycan. In Pseudomonas savastanoi pv. phaseolicola (strain 1448A / Race 6) (Pseudomonas syringae pv. phaseolicola (strain 1448A / Race 6)), this protein is Diaminopimelate epimerase.